The sequence spans 132 residues: L-ectoine synthase (132 aa).

Belongs to the ectoine synthase family.

It carries out the reaction (2S)-4-acetamido-2-aminobutanoate = L-ectoine + H2O. It functions in the pathway amine and polyamine biosynthesis; ectoine biosynthesis; L-ectoine from L-aspartate 4-semialdehyde: step 3/3. Catalyzes the circularization of gamma-N-acetyl-alpha,gamma-diaminobutyric acid (ADABA) to ectoine (1,4,5,6-tetrahydro-2-methyl-4-pyrimidine carboxylic acid), which is an excellent osmoprotectant. This is L-ectoine synthase from Rhodococcus opacus (strain B4).